The following is a 397-amino-acid chain: Acetate kinase 2 (397 aa).

Asn10 serves as a coordination point for Mg(2+). Lys17 provides a ligand contact to ATP. Arg90 serves as a coordination point for substrate. Catalysis depends on Asp147, which acts as the Proton donor/acceptor. Residues 207 to 211, 281 to 283, and 329 to 333 each bind ATP; these read HLGNG, DAR, and GIGEN. Glu385 provides a ligand contact to Mg(2+).

The protein belongs to the acetokinase family. In terms of assembly, homodimer. Requires Mg(2+) as cofactor. Mn(2+) serves as cofactor.

It is found in the cytoplasm. The enzyme catalyses acetate + ATP = acetyl phosphate + ADP. The protein operates within metabolic intermediate biosynthesis; acetyl-CoA biosynthesis; acetyl-CoA from acetate: step 1/2. In terms of biological role, catalyzes the formation of acetyl phosphate from acetate and ATP. Can also catalyze the reverse reaction. This chain is Acetate kinase 2, found in Vibrio vulnificus (strain CMCP6).